We begin with the raw amino-acid sequence, 2004 residues long: Alpha-2-macroglobulin homolog (2004 aa).

A signal peptide spans 1–27 (MLCCLVFKGLLSMDLLRFLLISPFALI).

It belongs to the protease inhibitor I39 (alpha-2-macroglobulin) family. Bacterial alpha-2-macroglobulin subfamily.

This chain is Alpha-2-macroglobulin homolog, found in Yersinia pestis.